A 78-amino-acid polypeptide reads, in one-letter code: D-alanyl carrier protein (78 aa).

The region spanning 1–78 is the Carrier domain; the sequence is MDFKQEVLDV…NIVNQLSELK (78 aa). Ser36 bears the O-(pantetheine 4'-phosphoryl)serine mark.

It belongs to the DltC family. Post-translationally, 4'-phosphopantetheine is transferred from CoA to a specific serine of apo-DCP.

It is found in the cytoplasm. It participates in cell wall biogenesis; lipoteichoic acid biosynthesis. In terms of biological role, carrier protein involved in the D-alanylation of lipoteichoic acid (LTA). The loading of thioester-linked D-alanine onto DltC is catalyzed by D-alanine--D-alanyl carrier protein ligase DltA. The DltC-carried D-alanyl group is further transferred to cell membrane phosphatidylglycerol (PG) by forming an ester bond, probably catalyzed by DltD. D-alanylation of LTA plays an important role in modulating the properties of the cell wall in Gram-positive bacteria, influencing the net charge of the cell wall. This Bacillus subtilis (strain 168) protein is D-alanyl carrier protein.